Here is a 115-residue protein sequence, read N- to C-terminus: Large ribosomal subunit protein bL19 (115 aa).

The protein belongs to the bacterial ribosomal protein bL19 family.

Functionally, this protein is located at the 30S-50S ribosomal subunit interface and may play a role in the structure and function of the aminoacyl-tRNA binding site. The polypeptide is Large ribosomal subunit protein bL19 (Streptococcus suis (strain 98HAH33)).